Here is a 415-residue protein sequence, read N- to C-terminus: N-succinylarginine dihydrolase (415 aa).

Substrate contacts are provided by residues 18-27, asparagine 100, and 127-128; these read AGLSRGNIAS and HR. Glutamate 161 is a catalytic residue. Residue arginine 193 participates in substrate binding. The active site involves histidine 229. Residues aspartate 231 and asparagine 340 each contribute to the substrate site. The active-site Nucleophile is cysteine 346.

The protein belongs to the succinylarginine dihydrolase family. In terms of assembly, homodimer.

It carries out the reaction N(2)-succinyl-L-arginine + 2 H2O + 2 H(+) = N(2)-succinyl-L-ornithine + 2 NH4(+) + CO2. Its pathway is amino-acid degradation; L-arginine degradation via AST pathway; L-glutamate and succinate from L-arginine: step 2/5. Functionally, catalyzes the hydrolysis of N(2)-succinylarginine into N(2)-succinylornithine, ammonia and CO(2). This chain is N-succinylarginine dihydrolase, found in Sphingopyxis alaskensis (strain DSM 13593 / LMG 18877 / RB2256) (Sphingomonas alaskensis).